The sequence spans 873 residues: Protein SEY1 (873 aa).

A disordered region spans residues 1 to 20 (MVANGHFAGSADGQHSSSYE). Over 1-749 (MVANGHFAGS…KRSAIGGITQ (749 aa)) the chain is Cytoplasmic. Residues 49–307 (GFNYHLISVF…IPADGFAVYA (259 aa)) enclose the GB1/RHD3-type G domain. 59 to 66 (GSQSTGKS) is a GTP binding site. Residues 482–506 (SNYQQELSLYQKDLERTSGQLRRDE) adopt a coiled-coil conformation. A disordered region spans residues 677–703 (DKWIGHTPSSATPADEEDLTPIGGVDD). A compositionally biased stretch (acidic residues) spans 690–703 (ADEEDLTPIGGVDD). A helical transmembrane segment spans residues 750–770 (VPLYFYGLLFALGWNEILAVL). The Lumenal portion of the chain corresponds to 771–773 (RNP). A helical membrane pass occupies residues 774-794 (VYFLLLFVCAIGAYITYQLNL). The Cytoplasmic portion of the chain corresponds to 795–873 (WGPIIKMTEA…EDVDDDDDDF (79 aa)). Residues 828 to 873 (RQAMAMSGARNATEEHEMSRLSRKPAERGGRKNRADEDVDDDDDDF) are disordered. Residues 839–863 (ATEEHEMSRLSRKPAERGGRKNRAD) are compositionally biased toward basic and acidic residues. Residues 864 to 873 (EDVDDDDDDF) are compositionally biased toward acidic residues.

Belongs to the TRAFAC class dynamin-like GTPase superfamily. GB1/RHD3 GTPase family. RHD3 subfamily.

Its subcellular location is the endoplasmic reticulum membrane. In terms of biological role, cooperates with the reticulon proteins and tubule-shaping DP1 family proteins to generate and maintain the structure of the tubular endoplasmic reticulum network. Has GTPase activity, which is required for its function in ER organization. In Ajellomyces capsulatus (strain NAm1 / WU24) (Darling's disease fungus), this protein is Protein SEY1.